The sequence spans 357 residues: CCN family member 3 (357 aa).

The first 31 residues, 1–31 (MQSVQSTSFCLRKQCLCLTFLLLHLLGQVAA), serve as a signal peptide directing secretion. The IGFBP N-terminal domain occupies 32–105 (TQRCPPQCPG…SNQTGICTAV (74 aa)). 6 disulfides stabilise this stretch: C35/C61, C39/C63, C43/C64, C50/C67, C75/C89, and C81/C102. N-linked (GlcNAc...) asparagine glycosylation is present at N97. One can recognise a VWFC domain in the interval 108 to 174 (DNCVFDGVIY…GECCEKWICG (67 aa)). One can recognise a TSP type-1 domain in the interval 205 to 250 (NCIEQTTEWTACSKSCGMGFSTRVTNRNRQCEMLKQTRLCMVRPCE). C244 carries S-palmitoyl cysteine lipidation. 5 disulfide bridges follow: C264–C301, C281–C315, C292–C331, C295–C333, and C300–C337. The CTCK domain occupies 264–338 (CLRTKKSLKA…GTCTCHTNCP (75 aa)). N280 is a glycosylation site (N-linked (GlcNAc...) asparagine).

This sequence belongs to the CCN family. Interacts with FBLN1. Interacts (via CTCK domain) with NOTCH1 (via the EGF-like repeat region). Interacts with GJA1/CX43. Interacts with ITGA5:ITGB1, ITGAV:ITGB3 and ITGAV:ITGB5. Interacts with ZDHHC22; the interaction may lead to CCN3 palmitoylation. May be palmitoylated on Cys-244, which is important for extracellular secretion. As to expression, expressed in endothelial cells (at protein level). Expressed in bone marrow and thymic cells.

The protein resides in the secreted. It is found in the cytoplasm. The protein localises to the cell junction. It localises to the gap junction. Functionally, immediate-early protein playing a role in various cellular processes including proliferation, adhesion, migration, differentiation and survival. Acts by binding to integrins or membrane receptors such as NOTCH1. Essential regulator of hematopoietic stem and progenitor cell function. Inhibits myogenic differentiation through the activation of Notch-signaling pathway. Inhibits vascular smooth muscle cells proliferation by increasing expression of cell-cycle regulators such as CDKN2B or CDKN1A independently of TGFB1 signaling. Ligand of integrins ITGAV:ITGB3 and ITGA5:ITGB1, acts directly upon endothelial cells to stimulate pro-angiogenic activities and induces angiogenesis. In endothelial cells, supports cell adhesion, induces directed cell migration (chemotaxis) and promotes cell survival. Also plays a role in cutaneous wound healing acting as integrin receptor ligand. Supports skin fibroblast adhesion through ITGA5:ITGB1 and ITGA6:ITGB1 and induces fibroblast chemotaxis through ITGAV:ITGB5. Seems to enhance bFGF-induced DNA synthesis in fibroblasts. Involved in bone regeneration as a negative regulator. Enhances the articular chondrocytic phenotype, whereas it repressed the one representing endochondral ossification. Impairs pancreatic beta-cell function, inhibits beta-cell proliferation and insulin secretion. Plays a role as negative regulator of endothelial pro-inflammatory activation reducing monocyte adhesion, its anti-inflammatory effects occur secondary to the inhibition of NF-kappaB signaling pathway. Contributes to the control and coordination of inflammatory processes in atherosclerosis. Attenuates inflammatory pain through regulation of IL1B- and TNF-induced MMP9, MMP2 and CCL2 expression. Inhibits MMP9 expression through ITGB1 engagement. Brain osteoanabolic hormone. Drives osteogenesis in osteochondral skeletal stem cells. During lactation, maintains the maternal skeleton and viability of offspring. This chain is CCN family member 3, found in Homo sapiens (Human).